A 493-amino-acid polypeptide reads, in one-letter code: Angiopoietin-related protein 2 (493 aa).

Positions 1–19 (MRPLCMTYWWLGLLATVGA) are cleaved as a signal peptide. Coiled coils occupy residues 77–115 (EVHLENRVHKQELELLNNELLKQKRQIETLQQLVEVDGG) and 152–202 (ALEL…QLEE). N-linked (GlcNAc...) asparagine glycosylation is found at asparagine 164 and asparagine 192. A Fibrinogen C-terminal domain is found at 269-489 (DKPSGPWRDC…KVVMMIRPNP (221 aa)). 2 cysteine pairs are disulfide-bonded: cysteine 278–cysteine 307 and cysteine 430–cysteine 443.

Widely expressed in heart, tongue, lung and skeletal muscle. Also found in lower levels in kidney, epididymis and testis.

The protein resides in the secreted. In terms of biological role, induces sprouting in endothelial cells through an autocrine and paracrine action. The chain is Angiopoietin-related protein 2 (Angptl2) from Mus musculus (Mouse).